The primary structure comprises 118 residues: Large ribosomal subunit protein bL19 (118 aa).

It belongs to the bacterial ribosomal protein bL19 family.

Its function is as follows. This protein is located at the 30S-50S ribosomal subunit interface and may play a role in the structure and function of the aminoacyl-tRNA binding site. This chain is Large ribosomal subunit protein bL19, found in Geotalea daltonii (strain DSM 22248 / JCM 15807 / FRC-32) (Geobacter daltonii).